Here is a 94-residue protein sequence, read N- to C-terminus: Integration host factor subunit beta (94 aa).

Belongs to the bacterial histone-like protein family. As to quaternary structure, heterodimer of an alpha and a beta chain.

Functionally, this protein is one of the two subunits of integration host factor, a specific DNA-binding protein that functions in genetic recombination as well as in transcriptional and translational control. The polypeptide is Integration host factor subunit beta (Pseudomonas paraeruginosa (strain DSM 24068 / PA7) (Pseudomonas aeruginosa (strain PA7))).